We begin with the raw amino-acid sequence, 116 residues long: Protein Rev (116 aa).

Phosphoserine; by host CK2 is present on residues Ser-5 and Ser-8. Positions 18–26 (LIKFLYQSN) are homomultimerization. The tract at residues 23 to 48 (YQSNPPPNPEGTRQARRNRRRRWRER) is disordered. The short motif at 34–50 (TRQARRNRRRRWRERQR) is the Nuclear localization signal and RNA-binding (RRE) element. Residues 36–48 (QARRNRRRRWRER) show a composition bias toward basic residues. Residues 73–84 (LQLPPLERLNLD) carry the Nuclear export signal and binding to XPO1 motif. The disordered stretch occupies residues 90–116 (GTSGTQGVGSPEILVESPAVLEPGTKE). Ser-92 and Ser-99 each carry phosphoserine; by host.

Belongs to the HIV-1 REV protein family. In terms of assembly, homomultimer; when bound to the RRE. Multimeric assembly is essential for activity and may involve XPO1. Binds to human KPNB1, XPO1, TNPO1, RANBP5 and IPO7. Interacts with the viral Integrase. Interacts with human KHDRBS1. Interacts with human NAP1; this interaction decreases Rev multimerization and stimulates its activity. Interacts with human DEAD-box helicases DDX3 and DDX24; these interactions may serve for viral RNA export to the cytoplasm and packaging, respectively. Interacts with human PSIP1; this interaction may inhibit HIV-1 DNA integration by promoting dissociation of the Integrase-LEDGF/p75 complex. Asymmetrically arginine dimethylated at one site by host PRMT6. Methylation impairs the RNA-binding activity and export of viral RNA from the nucleus to the cytoplasm. In terms of processing, phosphorylated by protein kinase CK2. Presence of, and maybe binding to the N-terminus of the regulatory beta subunit of CK2 is necessary for CK2-mediated Rev's phosphorylation.

The protein localises to the host nucleus. It is found in the host nucleolus. It localises to the host cytoplasm. Escorts unspliced or incompletely spliced viral pre-mRNAs (late transcripts) out of the nucleus of infected cells. These pre-mRNAs carry a recognition sequence called Rev responsive element (RRE) located in the env gene, that is not present in fully spliced viral mRNAs (early transcripts). This function is essential since most viral proteins are translated from unspliced or partially spliced pre-mRNAs which cannot exit the nucleus by the pathway used by fully processed cellular mRNAs. Rev itself is translated from a fully spliced mRNA that readily exits the nucleus. Rev's nuclear localization signal (NLS) binds directly to KPNB1/Importin beta-1 without previous binding to KPNA1/Importin alpha-1. KPNB1 binds to the GDP bound form of RAN (Ran-GDP) and targets Rev to the nucleus. In the nucleus, the conversion from Ran-GDP to Ran-GTP dissociates Rev from KPNB1 and allows Rev's binding to the RRE in viral pre-mRNAs. Rev multimerization on the RRE via cooperative assembly exposes its nuclear export signal (NES) to the surface. Rev can then form a complex with XPO1/CRM1 and Ran-GTP, leading to nuclear export of the complex. Conversion from Ran-GTP to Ran-GDP mediates dissociation of the Rev/RRE/XPO1/RAN complex, so that Rev can return to the nucleus for a subsequent round of export. Beside KPNB1, also seems to interact with TNPO1/Transportin-1, RANBP5/IPO5 and IPO7/RANBP7 for nuclear import. The nucleoporin-like HRB/RIP is an essential cofactor that probably indirectly interacts with Rev to release HIV RNAs from the perinuclear region to the cytoplasm. The protein is Protein Rev of Human immunodeficiency virus type 1 group M subtype B (isolate OYI) (HIV-1).